The primary structure comprises 220 residues: MSSLSKEAELVHQALLARGLETPLRKPELDAETRKTRIQAHMTEVMHLLNLDLTDDSLADTPRRIAKMYVDEIFSGLDYENFPKITLIQNKMKVDEMVTVRDITLTSTCEHHFVTIDGKATVAYIPKDSVIGLSKINRIVQFFAQRPQVQERLTQQILLALQTLLGTNNVAVSIDAVHYCVKARGIRDATSATTTTSLGGLFKSSQNTRQEFLRAVRHHG.

Zn(2+) is bound by residues C109, H112, and C180.

This sequence belongs to the GTP cyclohydrolase I family. Toroid-shaped homodecamer, composed of two pentamers of five dimers.

It carries out the reaction GTP + H2O = 7,8-dihydroneopterin 3'-triphosphate + formate + H(+). The protein operates within cofactor biosynthesis; 7,8-dihydroneopterin triphosphate biosynthesis; 7,8-dihydroneopterin triphosphate from GTP: step 1/1. The sequence is that of GTP cyclohydrolase 1 from Yersinia pseudotuberculosis serotype O:1b (strain IP 31758).